Consider the following 215-residue polypeptide: Osmoprotectant import permease protein OsmW (215 aa).

The region spanning 18–202 is the ABC transmembrane type-1 domain; that stretch reads TFQHLWLVAL…LLAIVLDWLL (185 aa). Helical transmembrane passes span 24–44, 51–73, 78–100, 132–152, 153–173, and 183–203; these read LVAL…VLIV, TPVL…GLMI, LIGH…LLPI, WVEI…AVVM, NIGV…LLLL, and MLIA…WLLH.

This sequence belongs to the binding-protein-dependent transport system permease family. The complex is composed of two ATP-binding proteins (OsmV), two transmembrane proteins (OsmW and OsmY) and a solute-binding protein (OsmX).

It is found in the cell inner membrane. Functionally, part of the OsmU ABC transporter complex, which is involved in the uptake of osmoprotectants such as choline-O-sulfate and glycine betaine. Probably responsible for the translocation of the substrate across the membrane. This Salmonella typhimurium (strain LT2 / SGSC1412 / ATCC 700720) protein is Osmoprotectant import permease protein OsmW (osmW).